Consider the following 109-residue polypeptide: Small ribosomal subunit protein bS6 (109 aa).

The protein belongs to the bacterial ribosomal protein bS6 family.

Binds together with bS18 to 16S ribosomal RNA. The chain is Small ribosomal subunit protein bS6 from Ehrlichia chaffeensis (strain ATCC CRL-10679 / Arkansas).